Consider the following 25-residue polypeptide: Non-specific lipid-transfer protein 3 (25 aa).

In terms of tissue distribution, seeds (at protein level).

Functionally, plant non-specific lipid-transfer proteins transfer phospholipids as well as galactolipids across membranes. May play a role in wax or cutin deposition in the cell walls of expanding epidermal cells and certain secretory tissues. Has antibacterial and antifungal activity. Displays antibacterial activity towards both Gram-negative bacteria, P.carotovorum (IC(50)=11.5 uM) and P.syringae (IC(50)=12.0 uM), and Gram-positive bacterium C.michiganensis subsp michiganense (IC(50)=11.2 uM). Also displays antifungal activity towards A.niger VKM F-33 (IC(50)=1.05 uM) and B.cinerea TSKHA (IC(50)=1.88 uM) and relatively moderate activity towards B.sorokiniana VKM F-1448 (IC(50)=1.55 uM). Displays some inhibitory activity towards P.infestans OSV12. The polypeptide is Non-specific lipid-transfer protein 3 (Nigella sativa (Black cumin)).